A 411-amino-acid polypeptide reads, in one-letter code: Peptidase T (411 aa).

Position 79 (His-79) interacts with Zn(2+). The active site involves Asp-81. Asp-142 serves as a coordination point for Zn(2+). Glu-176 (proton acceptor) is an active-site residue. Positions 177, 199, and 381 each coordinate Zn(2+).

It belongs to the peptidase M20B family. Zn(2+) serves as cofactor.

The protein resides in the cytoplasm. The catalysed reaction is Release of the N-terminal residue from a tripeptide.. Cleaves the N-terminal amino acid of tripeptides. The chain is Peptidase T from Geobacillus kaustophilus (strain HTA426).